The primary structure comprises 86 residues: Large ribosomal subunit protein bL27 (86 aa).

The tract at residues 1-22 (MATKKAGGSSRNGRDSAGRRLG) is disordered.

The protein belongs to the bacterial ribosomal protein bL27 family.

The polypeptide is Large ribosomal subunit protein bL27 (Rickettsia rickettsii (strain Iowa)).